Reading from the N-terminus, the 491-residue chain is Probable CtpA-like serine protease (491 aa).

The tract at residues 1-22 (MSESKDTTEVNQEVNEKASSQS) is disordered. Positions 9 to 22 (EVNQEVNEKASSQS) are enriched in polar residues. Residues 34 to 54 (FIIILIVTILVTAMIAVFATI) traverse the membrane as a helical segment. The PDZ domain maps to 119–201 (TKSFNEDVSG…TKVTLTIERG (83 aa)). Catalysis depends on charge relay system residues Ser-324, Asp-335, and Lys-349.

It belongs to the peptidase S41A family.

The protein localises to the cell membrane. In Staphylococcus saprophyticus subsp. saprophyticus (strain ATCC 15305 / DSM 20229 / NCIMB 8711 / NCTC 7292 / S-41), this protein is Probable CtpA-like serine protease.